The following is a 609-amino-acid chain: UvrABC system protein C (609 aa).

Residues 16-94 (SSAGVYRMYD…IKQYMPKYNV (79 aa)) enclose the GIY-YIG domain. The UVR domain occupies 203-238 (QQVISALVDKMELAAERQAYEQAARFRDQIMALRKV).

Belongs to the UvrC family. In terms of assembly, interacts with UvrB in an incision complex.

The protein resides in the cytoplasm. Its function is as follows. The UvrABC repair system catalyzes the recognition and processing of DNA lesions. UvrC both incises the 5' and 3' sides of the lesion. The N-terminal half is responsible for the 3' incision and the C-terminal half is responsible for the 5' incision. In Shewanella baltica (strain OS155 / ATCC BAA-1091), this protein is UvrABC system protein C.